Here is a 505-residue protein sequence, read N- to C-terminus: Deoxyguanosinetriphosphate triphosphohydrolase (505 aa).

The region spanning 66–273 (RLTHSMEVQQ…MEAADDISYC (208 aa)) is the HD domain.

This sequence belongs to the dGTPase family. Type 1 subfamily. In terms of assembly, homotetramer. Mg(2+) is required as a cofactor.

It carries out the reaction dGTP + H2O = 2'-deoxyguanosine + triphosphate + H(+). Its function is as follows. dGTPase preferentially hydrolyzes dGTP over the other canonical NTPs. The sequence is that of Deoxyguanosinetriphosphate triphosphohydrolase from Salmonella choleraesuis (strain SC-B67).